Reading from the N-terminus, the 926-residue chain is Probable Xaa-Pro aminopeptidase PTT_10145 (926 aa).

The Mn(2+) site is built by D274, D285, E435, and E476. Disordered regions lie at residues G505 to S538, K595 to V615, S668 to H696, I711 to T741, and M865 to R926. The span at N506–P515 shows a compositional bias: polar residues. Basic and acidic residues-rich tracts occupy residues S685–H696 and G719–D730. The span at N887 to D897 shows a compositional bias: polar residues. Basic and acidic residues predominate over residues P900 to R915.

It belongs to the peptidase M24B family. Mn(2+) serves as cofactor.

It catalyses the reaction Release of any N-terminal amino acid, including proline, that is linked to proline, even from a dipeptide or tripeptide.. Functionally, catalyzes the removal of a penultimate prolyl residue from the N-termini of peptides. The chain is Probable Xaa-Pro aminopeptidase PTT_10145 from Pyrenophora teres f. teres (strain 0-1) (Barley net blotch fungus).